Here is a 384-residue protein sequence, read N- to C-terminus: Galactokinase (384 aa).

35–38 contacts substrate; sequence EHTD. Residues Ser69 and 125 to 131 each bind ATP; that span reads GAGLSSS. The Mg(2+) site is built by Ser131 and Glu163. The active-site Proton acceptor is Asp175. Tyr224 is a binding site for substrate.

The protein belongs to the GHMP kinase family. GalK subfamily.

Its subcellular location is the cytoplasm. It catalyses the reaction alpha-D-galactose + ATP = alpha-D-galactose 1-phosphate + ADP + H(+). The protein operates within carbohydrate metabolism; galactose metabolism. Catalyzes the transfer of the gamma-phosphate of ATP to D-galactose to form alpha-D-galactose-1-phosphate (Gal-1-P). In Aliivibrio fischeri (strain MJ11) (Vibrio fischeri), this protein is Galactokinase.